Here is a 99-residue protein sequence, read N- to C-terminus: Glycine-rich protein (99 aa).

The signal sequence occupies residues 1–18 (MKSMIAVLLLALVATSMA).

The protein belongs to the non-disulfide-bridged peptide (NDBP) superfamily. In terms of tissue distribution, expressed by the venom gland.

It localises to the secreted. This Lychas mucronatus (Chinese swimming scorpion) protein is Glycine-rich protein.